We begin with the raw amino-acid sequence, 255 residues long: MLKIADRQFSSRLLLGTGKYPSFEIQKEAVSASESEILTFAVRRMNIFEESQPNFLEQLDLSRYTLLPNTAGAKTAEEAVRIAKLAKASGLCDMIKVEVIGCDRSLLPDPVETLKASETLLEEGFIVLPYTSDDVVLARKLEELGVHAIMPGASPIGSGQGIINPLNLSFIIEQAKVPVIVDAGIGSPKDAAYAMELGADGVLLNTAVSGAKDPVQMAKAMKFAVEAGRLGYLAGRIPEKNYGIASSPEEGKLTI.

The active-site Schiff-base intermediate with DXP is Lys-96. Residues Gly-157, Ala-183–Gly-184, and Asn-205–Thr-206 each bind 1-deoxy-D-xylulose 5-phosphate.

This sequence belongs to the ThiG family. As to quaternary structure, homotetramer. Forms heterodimers with either ThiH or ThiS.

It localises to the cytoplasm. It carries out the reaction [ThiS sulfur-carrier protein]-C-terminal-Gly-aminoethanethioate + 2-iminoacetate + 1-deoxy-D-xylulose 5-phosphate = [ThiS sulfur-carrier protein]-C-terminal Gly-Gly + 2-[(2R,5Z)-2-carboxy-4-methylthiazol-5(2H)-ylidene]ethyl phosphate + 2 H2O + H(+). The protein operates within cofactor biosynthesis; thiamine diphosphate biosynthesis. Functionally, catalyzes the rearrangement of 1-deoxy-D-xylulose 5-phosphate (DXP) to produce the thiazole phosphate moiety of thiamine. Sulfur is provided by the thiocarboxylate moiety of the carrier protein ThiS. In vitro, sulfur can be provided by H(2)S. This Bacillus licheniformis (strain ATCC 14580 / DSM 13 / JCM 2505 / CCUG 7422 / NBRC 12200 / NCIMB 9375 / NCTC 10341 / NRRL NRS-1264 / Gibson 46) protein is Thiazole synthase.